A 121-amino-acid chain; its full sequence is Small ribosomal subunit protein uS13 (121 aa).

Positions 91 to 121 (HRRGLPVRGQNTKNNARTRKGPSKTVAGKKK) are disordered. A compositionally biased stretch (basic residues) spans 106–121 (ARTRKGPSKTVAGKKK).

The protein belongs to the universal ribosomal protein uS13 family. Part of the 30S ribosomal subunit. Forms a loose heterodimer with protein S19. Forms two bridges to the 50S subunit in the 70S ribosome.

Functionally, located at the top of the head of the 30S subunit, it contacts several helices of the 16S rRNA. In the 70S ribosome it contacts the 23S rRNA (bridge B1a) and protein L5 of the 50S subunit (bridge B1b), connecting the 2 subunits; these bridges are implicated in subunit movement. Contacts the tRNAs in the A and P-sites. In Listeria welshimeri serovar 6b (strain ATCC 35897 / DSM 20650 / CCUG 15529 / CIP 8149 / NCTC 11857 / SLCC 5334 / V8), this protein is Small ribosomal subunit protein uS13.